The following is a 655-amino-acid chain: D-xylonate dehydratase YjhG (655 aa).

The protein belongs to the IlvD/Edd family.

It carries out the reaction D-xylonate = 2-dehydro-3-deoxy-D-arabinonate + H2O. Activity is increased in the presence of Mn(+) and Mg(2+). Inhibited by thiol compounds. Functionally, catalyzes the dehydration of D-xylonic acid to form 2-dehydro-3-deoxy-D-pentonate. In Escherichia coli (strain K12), this protein is D-xylonate dehydratase YjhG (yjhG).